A 993-amino-acid polypeptide reads, in one-letter code: ATP-dependent DNA helicase MPH1 (993 aa).

One can recognise a Helicase ATP-binding domain in the interval 94–261 (IVHKSLFQNT…EVVNNLDISK (168 aa)). Residue 107–114 (IPTGMGKT) participates in ATP binding. The DEAH box motif lies at 209–212 (DEAH). A Helicase C-terminal domain is found at 507-655 (KVERLHRQEQ…CIDYKKSDRI (149 aa)). Positions 530 to 551 (NDKLERSARRTGSSEEAQISGM) are disordered. The span at 539–551 (RTGSSEEAQISGM) shows a compositional bias: polar residues.

The protein belongs to the DEAD box helicase family. DEAH subfamily. FANCM sub-subfamily. As to quaternary structure, interacts with the MHF histone-fold complex to form the FANCM-MHF complex.

The protein localises to the nucleus. The enzyme catalyses ATP + H2O = ADP + phosphate + H(+). Functionally, ATP-dependent DNA helicase involved in DNA damage repair by homologous recombination and in genome maintenance. Capable of unwinding D-loops. Plays a role in limiting crossover recombinants during mitotic DNA double-strand break (DSB) repair. Component of a FANCM-MHF complex which promotes gene conversion at blocked replication forks, probably by reversal of the stalled fork. This is ATP-dependent DNA helicase MPH1 from Saccharomyces cerevisiae (strain YJM789) (Baker's yeast).